We begin with the raw amino-acid sequence, 382 residues long: MENKQCDHLTDWFSTTSDASESMDTTPPLPPPTPSVDPSYSGAAADEDLYSDISEGDLEYSDCDSASESDEDDDDCLIPSKEKAREVAASFGYTVIKTLTPGSEGRVMVATKDGQPEPVVLKIGQKGTTLIEAMMLRNVNHPSVIQMKDTLVSGAITCMVLPHYSSDLYTFLTKESRRIPIDQALIIEKQILEGLRYLHAQRIIHRDVKTENIFINSVDQVCIADFGAAQFPVVEPADLGLAGTVETNAPEVLARAKYNSKADIWSAGIVLFEMLAYPSTLFEDPPSTPEEYVKSCHSQLLKIISTLKINPEEFPRDPGSRLVRGYIEYSRLERKPYTRYPCFQRVNLHIDGEFLVHKMLAFNAAMRPSAEELLSYPMFAQL.

Positions 1–10 (MENKQCDHLT) are enriched in basic and acidic residues. The segment at 1–75 (MENKQCDHLT…ASESDEDDDD (75 aa)) is disordered. Residues 12–24 (WFSTTSDASESMD) show a composition bias toward polar residues. The segment covering 45–75 (ADEDLYSDISEGDLEYSDCDSASESDEDDDD) has biased composition (acidic residues). The 287-residue stretch at 93-379 (YTVIKTLTPG…AEELLSYPMF (287 aa)) folds into the Protein kinase domain. Residues 99 to 107 (LTPGSEGRV) and Lys122 each bind ATP. Asp207 serves as the catalytic Proton acceptor.

This sequence belongs to the protein kinase superfamily. Ser/Thr protein kinase family. In terms of processing, phosphorylated by protein 49; this phosphorylation regulates subsequent phosphorylation of proteins 26 and 29 by US3 homolog. Autophosphorylated.

The protein localises to the host cytoplasm. Its subcellular location is the host nucleus. The catalysed reaction is L-seryl-[protein] + ATP = O-phospho-L-seryl-[protein] + ADP + H(+). The enzyme catalyses L-threonyl-[protein] + ATP = O-phospho-L-threonyl-[protein] + ADP + H(+). In terms of biological role, multifunctional serine/threonine kinase that plays a role in several processes including egress of virus particles from the nucleus, modulation of the actin cytoskeleton and inhibition of apoptosis. Phosphorylates protein 26 and 29, two critical regulators of capsid budding from nucleus to endoplasmic reticulum, thereby facilitating virion egress. Modulates and redistributes host components of the nuclear envelope, including LMNA, emerin/EMD and the nuclear matrix protein MATR3. Phosphorylates envelope glycoprotein B (gB), probably to direct it to the cell surface. Promotes virus intracellular spread by restructuring host cell cytoskeleton. Blocks host apoptosis to extend cell survival and allow efficient viral replication. Promotes viral gene expression by phosphorylating host HDAC2 to reduce viral genome silencing. This chain is Serine/threonine-protein kinase US3 homolog, found in Equine herpesvirus 1 (strain Ab4p) (EHV-1).